We begin with the raw amino-acid sequence, 404 residues long: Glucose-1-phosphate adenylyltransferase (404 aa).

Alpha-D-glucose 1-phosphate-binding positions include Tyr-99, Gly-164, 179–180 (EK), and Ser-197.

This sequence belongs to the bacterial/plant glucose-1-phosphate adenylyltransferase family. In terms of assembly, homotetramer.

It carries out the reaction alpha-D-glucose 1-phosphate + ATP + H(+) = ADP-alpha-D-glucose + diphosphate. Its pathway is glycan biosynthesis; glycogen biosynthesis. Functionally, involved in the biosynthesis of ADP-glucose, a building block required for the elongation reactions to produce glycogen. Catalyzes the reaction between ATP and alpha-D-glucose 1-phosphate (G1P) to produce pyrophosphate and ADP-Glc. This chain is Glucose-1-phosphate adenylyltransferase, found in Rhodococcus opacus (strain B4).